Here is a 92-residue protein sequence, read N- to C-terminus: Long neurotoxin 2 (92 aa).

Residues 1-21 (MKTLLLTLVVVTIVCLDLGYT) form the signal peptide. 5 disulfides stabilise this stretch: Cys24/Cys42, Cys35/Cys63, Cys48/Cys52, Cys67/Cys79, and Cys80/Cys85.

It belongs to the three-finger toxin family. Long-chain subfamily. Type II alpha-neurotoxin sub-subfamily. In terms of tissue distribution, expressed by the venom gland.

The protein resides in the secreted. In terms of biological role, binds with high affinity to muscular (alpha-1/CHRNA1) and neuronal (alpha-7/CHRNA7) nicotinic acetylcholine receptor (nAChR) and inhibits acetylcholine from binding to the receptor, thereby impairing neuromuscular and neuronal transmission. The polypeptide is Long neurotoxin 2 (Oxyuranus microlepidotus (Inland taipan)).